The primary structure comprises 906 residues: Interference hedgehog (906 aa).

Residues 1–20 (MSPLTSSLLLFSLLTSSLEA) form the signal peptide. The Extracellular segment spans residues 21 to 715 (IPVLQPSFPP…SHNETVSMSP (695 aa)). Ig-like C2-type domains are found at residues 39 to 144 (PGVR…TARL), 134 to 236 (PLVV…ISSS), 252 to 341 (PHLL…INVT), and 346 to 433 (PRIT…LQVN). Cysteines 62 and 128 form a disulfide. N-linked (GlcNAc...) asparagine glycans are attached at residues N85, N104, N148, and N209. Disulfide bonds link C173/C220 and C276/C324. Residues N339 and N388 are each glycosylated (N-linked (GlcNAc...) asparagine). A disulfide bond links C367 and C415. A compositionally biased stretch (polar residues) spans 427-439 (GTLLQVNPKQIQS). Positions 427–476 (GTLLQVNPKQIQSEPRETGSGGGFGSHRSMKPVNHGQKPTKMIPPSPPNV) are disordered. Fibronectin type-III domains lie at 470 to 578 (PPSP…LQPG) and 586 to 681 (VPEL…TQRP). N475 carries N-linked (GlcNAc...) asparagine glycosylation. Residues R506, K512, K514, and R552 each coordinate heparin. A glycan (N-linked (GlcNAc...) asparagine) is linked at N568. Residues 673-713 (LKQGRTQRPRASTTEEPTIQGIGDRDTTSHNQPSHNETVSM) are disordered. 2 stretches are compositionally biased toward polar residues: residues 676-689 (GRTQRPRASTTEEP) and 701-713 (SHNQPSHNETVSM). The helical transmembrane segment at 716–736 (MLTGTIGGGALLLILLVSAFL) threads the bilayer. Residues 737 to 906 (CMCRRRSPRG…SSGSLNSVGV (170 aa)) lie on the Cytoplasmic side of the membrane. The segment at 789–906 (AQQQQQQLDE…SSGSLNSVGV (118 aa)) is disordered. 2 stretches are compositionally biased toward low complexity: residues 854–866 (GNNNNLNQSSEAG) and 890–906 (SSRSENLSSGSLNSVGV).

It belongs to the immunoglobulin superfamily. IHOG family. As to quaternary structure, homodimer. Heterotetramer; 2 iHog chains bind 2 hh chains when facilitated by heparin, heparin is required to promote high-affinity interactions between hh and iHog.

The protein resides in the membrane. In terms of biological role, mediates response to the active Hedgehog (Hh) protein signal in embryos, functioning upstream or at the level of patched (ptc). The protein is Interference hedgehog of Drosophila persimilis (Fruit fly).